The primary structure comprises 691 residues: Guanylate cyclase soluble subunit alpha-1 (691 aa).

Residue Ser267 is modified to Phosphoserine. Residues 480–607 (VTMLFSDIVG…GNNVTLANKF (128 aa)) form the Guanylate cyclase domain.

It belongs to the adenylyl cyclase class-4/guanylyl cyclase family. In terms of assembly, the active enzyme is formed by a heterodimer of an alpha and a beta subunit. Heterodimer with GUCY1B1. Mg(2+) is required as a cofactor. It depends on Mn(2+) as a cofactor.

It is found in the cytoplasm. It catalyses the reaction GTP = 3',5'-cyclic GMP + diphosphate. Activated by nitric oxide in the presence of magnesium or manganese ions. The polypeptide is Guanylate cyclase soluble subunit alpha-1 (Gucy1a1) (Mus musculus (Mouse)).